Reading from the N-terminus, the 64-residue chain is Large ribosomal subunit protein bL35 (64 aa).

Belongs to the bacterial ribosomal protein bL35 family.

In Streptomyces coelicolor (strain ATCC BAA-471 / A3(2) / M145), this protein is Large ribosomal subunit protein bL35.